Reading from the N-terminus, the 144-residue chain is Large ribosomal subunit protein uL11 (144 aa).

It belongs to the universal ribosomal protein uL11 family. As to quaternary structure, part of the ribosomal stalk of the 50S ribosomal subunit. Interacts with L10 and the large rRNA to form the base of the stalk. L10 forms an elongated spine to which L12 dimers bind in a sequential fashion forming a multimeric L10(L12)X complex. One or more lysine residues are methylated.

Forms part of the ribosomal stalk which helps the ribosome interact with GTP-bound translation factors. The protein is Large ribosomal subunit protein uL11 of Nocardia farcinica (strain IFM 10152).